A 352-amino-acid polypeptide reads, in one-letter code: Heat-inducible transcription repressor HrcA (352 aa).

The protein belongs to the HrcA family.

Its function is as follows. Negative regulator of class I heat shock genes (grpE-dnaK-dnaJ and groELS operons). Prevents heat-shock induction of these operons. In Latilactobacillus sakei (Lactobacillus sakei), this protein is Heat-inducible transcription repressor HrcA.